The following is a 138-amino-acid chain: ATP synthase epsilon chain (138 aa).

This sequence belongs to the ATPase epsilon chain family. In terms of assembly, F-type ATPases have 2 components, CF(1) - the catalytic core - and CF(0) - the membrane proton channel. CF(1) has five subunits: alpha(3), beta(3), gamma(1), delta(1), epsilon(1). CF(0) has three main subunits: a, b and c.

It is found in the cell inner membrane. In terms of biological role, produces ATP from ADP in the presence of a proton gradient across the membrane. In Vesicomyosocius okutanii subsp. Calyptogena okutanii (strain HA), this protein is ATP synthase epsilon chain.